The chain runs to 534 residues: MAKGEGAESGSAAGLLPTSILQASERPVQVKKEPKKKQQLSICNKLCYAVGGAPYQLTGCALGFFLQIYLLDVAKVEPLPASIILFVGRAWDAFTDPLVGFCISKSSWTRLGRLMPWIIFSTPLAIIAYFLIWFVPDFPSGTESSHGFLWYLLFYCLFETLVTCFHVPYSALTMFISTEQSERDSATAYRMTVEVLGTVIGTAIQGQIVGQAKAPCLQDQNGSVVVSEVANRTQSTASLKDTQNAYLLAAGIIASIYVLCAFILILGVREQRELYESQQAESMPFFQGLRLVMGHGPYVKLIAGFLFTSLAFMLVEGNFALFCTYTLDFRNEFQNLLLAIMLSATFTIPIWQWFLTRFGKKTAVYIGISSAVPFLILVALMERNLIVTYVVAVAAGVSVAAAFLLPWSMLPDVIDDFHLKHPHSPGTEPIFFSFYVFFTKFASGVSLGVSTLSLDFANYQRQGCSQPEQVKFTLKMLVTMAPIILILLGLLLFKLYPIDEEKRRQNKKALQALREEASSSGCSDTDSTELASIL.

Topologically, residues 1–39 are cytoplasmic; sequence MAKGEGAESGSAAGLLPTSILQASERPVQVKKEPKKKQQ. Residues 40–69 traverse the membrane as a helical segment; that stretch reads LSICNKLCYAVGGAPYQLTGCALGFFLQIY. Residues 70–80 are Extracellular-facing; that stretch reads LLDVAKVEPLP. The chain crosses the membrane as a helical span at residues 81-101; sequence ASIILFVGRAWDAFTDPLVGF. Topologically, residues 102–113 are cytoplasmic; that stretch reads CISKSSWTRLGR. Residues 114–133 traverse the membrane as a helical segment; that stretch reads LMPWIIFSTPLAIIAYFLIW. The Extracellular portion of the chain corresponds to 134-148; sequence FVPDFPSGTESSHGF. The helical transmembrane segment at 149 to 173 threads the bilayer; sequence LWYLLFYCLFETLVTCFHVPYSALT. Topologically, residues 174–180 are cytoplasmic; that stretch reads MFISTEQ. The helical transmembrane segment at 181–212 threads the bilayer; the sequence is SERDSATAYRMTVEVLGTVIGTAIQGQIVGQA. The Extracellular segment spans residues 213–232; it reads KAPCLQDQNGSVVVSEVANR. The cysteines at positions 216 and 464 are disulfide-linked. N-linked (GlcNAc...) asparagine glycans are attached at residues Asn-221 and Asn-231. Residues 233-266 form a helical membrane-spanning segment; the sequence is TQSTASLKDTQNAYLLAAGIIASIYVLCAFILIL. The Cytoplasmic portion of the chain corresponds to 267–297; it reads GVREQRELYESQQAESMPFFQGLRLVMGHGP. Residues 298–324 traverse the membrane as a helical segment; that stretch reads YVKLIAGFLFTSLAFMLVEGNFALFCT. The Extracellular segment spans residues 325–335; that stretch reads YTLDFRNEFQN. The helical transmembrane segment at 336-354 threads the bilayer; the sequence is LLLAIMLSATFTIPIWQWF. Over 355 to 358 the chain is Cytoplasmic; sequence LTRF. The helical transmembrane segment at 359–380 threads the bilayer; sequence GKKTAVYIGISSAVPFLILVAL. Residues 381–383 are Extracellular-facing; that stretch reads MER. A helical membrane pass occupies residues 384–420; it reads NLIVTYVVAVAAGVSVAAAFLLPWSMLPDVIDDFHLK. The Cytoplasmic portion of the chain corresponds to 421 to 430; that stretch reads HPHSPGTEPI. The helical transmembrane segment at 431–457 threads the bilayer; the sequence is FFSFYVFFTKFASGVSLGVSTLSLDFA. Residues 458–469 are Extracellular-facing; that stretch reads NYQRQGCSQPEQ. A helical transmembrane segment spans residues 470 to 493; sequence VKFTLKMLVTMAPIILILLGLLLF. Over 494-534 the chain is Cytoplasmic; it reads KLYPIDEEKRRQNKKALQALREEASSSGCSDTDSTELASIL.

This sequence belongs to the major facilitator superfamily. In terms of processing, N-glycosylated. Widely expressed. Exhibits an oscillatory pattern of expression in brown adipose tissue and liver consistent with a circadian rhythm. Enriched in brain micro-vessels, where it is specifically present in endothelium constituting the blood-brain barrier (at protein level).

It localises to the cell membrane. The protein localises to the endoplasmic reticulum membrane. The enzyme catalyses a 1-acyl-sn-glycero-3-phosphocholine(in) + Na(+)(in) = a 1-acyl-sn-glycero-3-phosphocholine(out) + Na(+)(out). It carries out the reaction 1-(4Z,7Z,10Z,13Z,16Z,19Z-docosahexaenoyl)-sn-glycero-3-phosphocholine(in) + Na(+)(in) = 1-(4Z,7Z,10Z,13Z,16Z,19Z-docosahexaenoyl)-sn-glycero-3-phosphocholine(out) + Na(+)(out). It catalyses the reaction 1-(9Z-octadecenoyl)-sn-glycero-3-phosphocholine(in) + Na(+)(in) = 1-(9Z-octadecenoyl)-sn-glycero-3-phosphocholine(out) + Na(+)(out). The catalysed reaction is 1-hexadecanoyl-sn-glycero-3-phosphocholine(in) + Na(+)(in) = 1-hexadecanoyl-sn-glycero-3-phosphocholine(out) + Na(+)(out). The enzyme catalyses a 1-acyl-sn-glycero-3-phosphoethanolamine(in) + Na(+)(in) = a 1-acyl-sn-glycero-3-phosphoethanolamine(out) + Na(+)(out). Functionally, sodium-dependent lysophosphatidylcholine (LPC) symporter, which plays an essential role for blood-brain barrier formation and function. Specifically expressed in endothelium of the blood-brain barrier of micro-vessels and transports LPC into the brain. Transport of LPC is essential because it constitutes the major mechanism by which docosahexaenoic acid (DHA), an omega-3 fatty acid that is essential for normal brain growth and cognitive function, enters the brain. Transports LPC carrying long-chain fatty acids such LPC oleate and LPC palmitate with a minimum acyl chain length of 14 carbons. Does not transport docosahexaenoic acid in unesterified fatty acid. Not required for central nervous system vascular morphogenesis. The chain is Sodium-dependent lysophosphatidylcholine symporter 1 from Mus musculus (Mouse).